Consider the following 397-residue polypeptide: Teichoic acid D-alanine hydrolase (397 aa).

The N-terminal stretch at 1–23 (MKFNKVKLVIHACVLLFIIISIA) is a signal peptide.

The protein localises to the cell membrane. The enzyme catalyses [(4-D-Ala)-(2-GlcNAc)-Rib-ol-P]n-[Gro-P]m-beta-D-ManNAc-(1-&gt;4)-alpha-D-GlcNAc-P-peptidoglycan + n H2O = [(2-GlcNAc)-Rib-ol-P]n-[Gro-P]m-beta-D-ManNAc-(1-&gt;4)-alpha-D-GlcNAc-P-peptidoglycan + n D-alanine.. In terms of biological role, catalyzes the liberation of D-alanyl moieties present on wall teichoic acid (WTA) and lipoteichoic acid (LTA). Affects the methicillin resistance level and autolysis in the presence of Triton X-100 as well as the cell wall structure. This chain is Teichoic acid D-alanine hydrolase (fmtA), found in Staphylococcus aureus (strain NCTC 8325 / PS 47).